A 421-amino-acid chain; its full sequence is MLKAVILIGGPQKGTRFRPLSFEVPKPLFPVAGVPMVQHHIEACSKVPNLKEILLIGFYQPNEALNSFLLKAQQEFKVAIRYLQEYSALGTGGGIYHFRDQILSGGPQAFFVMNADVCSEFPLVSMLDFHKQHGGSQSYVILGTTANRTQSLNYGCIVANRDTQEVLHYVEKPGTFVSDIINCGIYLFSPSIFQHIAEVFQQNQQELQLEENSSWQRMEVIRLEQDVFSTLAGRGKLYVYKTEGCWSQIKSAGSAIYASRLYLSQYGTTHPERLASTKEGGPTIRGNVYIHPTANVDPSAVLGPNVSIGMGVTVAAGVRIRESIILHGAVLQDHSCVLNTIVGWDSMVGRWARVEGTPSDPNPNDPYSKIDSETLFRDGKLTPSITILGCNVSIPAEVVILNSIVLPHKELSRSFKNQIIL.

The protein belongs to the transferase hexapeptide repeat family.

It carries out the reaction alpha-D-mannose 1-phosphate + GTP + H(+) = GDP-alpha-D-mannose + diphosphate. The protein operates within nucleotide-sugar biosynthesis; GDP-alpha-D-mannose biosynthesis; GDP-alpha-D-mannose from alpha-D-mannose 1-phosphate (GTP route): step 1/1. This chain is Mannose-1-phosphate guanyltransferase alpha-A (gmppa-a), found in Xenopus laevis (African clawed frog).